Here is a 315-residue protein sequence, read N- to C-terminus: HTH-type transcriptional regulator TreR (315 aa).

The HTH lacI-type domain occupies 5–59; the sequence is LTIKDIARLSGVGKSTVSRVLNNESGVSQLTRERVEAVMNQHGFSPSRSARAMRG. The segment at residues 7 to 26 is a DNA-binding region (H-T-H motif); the sequence is IKDIARLSGVGKSTVSRVLN. Alpha,alpha-trehalose 6-phosphate contacts are provided by residues 71 to 77, glycine 126, arginine 147, 187 to 190, arginine 194, threonine 242, and tyrosine 284; these read RLDSLSE and DVTT.

Homodimer.

Its function is as follows. Repressor of the treBC operon. It is able to bind trehalose-6-phosphate and trehalose. The chain is HTH-type transcriptional regulator TreR (treR) from Escherichia coli (strain K12).